The sequence spans 315 residues: Outer membrane protease IcsP (315 aa).

The N-terminal stretch at 1-20 (MKLKFFVLALCVPAIFTTHA) is a signal peptide. Active-site residues include aspartate 103, aspartate 105, aspartate 230, and histidine 232.

The protein belongs to the peptidase A26 family.

It localises to the cell outer membrane. Its function is as follows. Protease responsible for the cleavage of IcsA between 'Arg-758' and 'Arg-759', removing the entire alpha domain from IscA localized on the bacterial surface. This proteolytic activity contributes to the maintenance of a tight polar cap of IcsA, which is important to Shigella actin-based motility. This is Outer membrane protease IcsP (icsP) from Shigella flexneri.